We begin with the raw amino-acid sequence, 2541 residues long: Talin-1 (2541 aa).

The 318-residue stretch at 86 to 403 (RPLKIRMLDG…GYIDIILKKK (318 aa)) folds into the FERM domain. Positions 280–435 (FMAHKNCGNM…PKKSTVLQQQ (156 aa)) are interaction with LAYN. A helical bundle R1 region spans residues 482–655 (RGHMPPLTSA…QTSGELLQQI (174 aa)). Residues 656 to 786 (GESDTDPRFQ…ALNDLLQHIK (131 aa)) are helical bundle R2. Residues 787–911 (QHATGGQPIG…NAAAQNAIKK (125 aa)) are helical bundle R3. The tract at residues 913-1043 (LVHKLEHAAK…RTAAQKAQEA (131 aa)) is helical bundle R4. The helical bundle R5 stretch occupies residues 1045-1205 (GPLEIDSALG…NRCVNCLPGQ (161 aa)). The segment at 1206 to 1356 (RDVDAAIRMV…QLITMCTQQA (151 aa)) is helical bundle R6. The segment at 1357–1452 (PGQKECDNAL…AYLVGVSDPN (96 aa)) is helical bundle R7A. The interval 1358–1658 (GQKECDNALR…NMRDKAPGQR (301 aa)) is interaction with VCL and F-actin. The segment at 1460-1579 (LVDPTQFARA…NLTAFASNPE (120 aa)) is helical bundle R8. A glycan (O-linked (GlcNAc) threonine) is linked at Thr1486. The segment at 1580–1652 (FATVPAQISP…IKKLITNMRD (73 aa)) is helical bundle R7B. The helical bundle R9 stretch occupies residues 1654–1821 (APGQRECDEA…TLNEAASAAG (168 aa)). Residues 1822–1972 (VVGGMVDSIT…VLAALQAGNR (151 aa)) form a helical bundle R10 region. O-linked (GlcNAc) threonine glycosylation occurs at Thr1889. The helical bundle R11 stretch occupies residues 1973–2139 (GTQACITAAS…TVKAVEDEAT (167 aa)). The segment at 2140 to 2293 (KGTRALEATI…QAAEAMKGTE (154 aa)) is helical bundle R12. Residues 2292–2531 (TEWVDPEDPT…MIRQQQYKFL (240 aa)) form the I/LWEQ domain. The segment at 2299–2481 (DPTVIAENEL…AAQKAAAFQD (183 aa)) is helical bundle R13.

Interacts with PIP5K1C and NRAP. Binds with high affinity to vinculin VCL and with low affinity to integrins. Interacts with APBB1IP; this inhibits VCL binding. Interacts with F-actin. Interacts with LAYN. Interacts with THSD1. Post-translationally, phosphorylated.

It localises to the cell projection. It is found in the ruffle membrane. Its subcellular location is the cytoplasm. The protein resides in the cytoskeleton. The protein localises to the cell surface. It localises to the cell junction. It is found in the focal adhesion. High molecular weight cytoskeletal protein concentrated at regions of cell-substratum contact and, in lymphocytes, at cell-cell contacts. Involved in connections of major cytoskeletal structures to the plasma membrane. The polypeptide is Talin-1 (TLN1) (Gallus gallus (Chicken)).